Consider the following 150-residue polypeptide: Ribosomal RNA large subunit methyltransferase H (150 aa).

S-adenosyl-L-methionine is bound by residues Ala-100 and 118 to 123 (LSEMTF).

This sequence belongs to the RNA methyltransferase RlmH family. As to quaternary structure, homodimer.

It localises to the cytoplasm. It carries out the reaction pseudouridine(1915) in 23S rRNA + S-adenosyl-L-methionine = N(3)-methylpseudouridine(1915) in 23S rRNA + S-adenosyl-L-homocysteine + H(+). In terms of biological role, specifically methylates the pseudouridine at position 1915 (m3Psi1915) in 23S rRNA. The chain is Ribosomal RNA large subunit methyltransferase H from Helicobacter pylori (strain J99 / ATCC 700824) (Campylobacter pylori J99).